The sequence spans 655 residues: T-lymphocyte surface antigen Ly-9 (655 aa).

An N-terminal signal peptide occupies residues 1-47 (MVAPKSHTDDWAPGPFSSKPQRSQLQIFSSVLQTSLLFLLMGLRASG). The Ig-like V-type 1 domain occupies 48–158 (KDSAPTVVSG…FVYEQLQEPQ (111 aa)). Over 48-454 (KDSAPTVVSG…ICSGPERNTK (407 aa)) the chain is Extracellular. Asn-68, Asn-95, Asn-120, Asn-169, and Asn-173 each carry an N-linked (GlcNAc...) asparagine glycan. The 77-residue stretch at 159 to 235 (VTMKSVKVSE…NPVSQRSSLP (77 aa)) folds into the Ig-like C2-type 1 domain. 2 disulfides stabilise this stretch: Cys-172–Cys-242 and Cys-178–Cys-222. The 113-residue stretch at 251–363 (GTTGETVVGV…LLIYRRLRKP (113 aa)) folds into the Ig-like V-type 2 domain. N-linked (GlcNAc...) asparagine glycans are attached at residues Asn-285, Asn-413, and Asn-424. Positions 364 to 452 (KITWSLRHSE…ENICSGPERN (89 aa)) constitute an Ig-like C2-type 2 domain. Intrachain disulfides connect Cys-377–Cys-446 and Cys-383–Cys-427. The helical transmembrane segment at 455–476 (LWIGLFLMVCLLCVGIFSWCIW) threads the bilayer. The Cytoplasmic portion of the chain corresponds to 477–655 (KRKGRCSVPA…PESPTYENFT (179 aa)). A disordered region spans residues 521 to 556 (PLRPARQQPTPTSDSSSDSNLTTEEDEDRPEVHKPI). Residues 530–542 (TPTSDSSSDSNLT) show a composition bias toward low complexity. Short sequence motifs (ITSM) lie at residues 601-606 (TMYAQV) and 624-629 (TIYCSI). Phosphotyrosine is present on Tyr-603. The disordered stretch occupies residues 633–655 (QVVPPPQQNDLEIPESPTYENFT).

In terms of assembly, interacts with SH2D1A, SH2D1B and INPP5D. Interacts (via phosphorylated cytoplasmic domain) with PTPN11; the interaction is blocked by SH2D1A. As to expression, increased surface expression on T-cells of systemic lupus erythematosus (SLE) patients.

It is found in the membrane. It localises to the cell membrane. In terms of biological role, self-ligand receptor of the signaling lymphocytic activation molecule (SLAM) family. SLAM receptors triggered by homo- or heterotypic cell-cell interactions are modulating the activation and differentiation of a wide variety of immune cells and thus are involved in the regulation and interconnection of both innate and adaptive immune response. Activities are controlled by presence or absence of small cytoplasmic adapter proteins, SH2D1A/SAP and/or SH2D1B/EAT-2. May participate in adhesion reactions between T lymphocytes and accessory cells by homophilic interaction. Promotes T-cell differentiation into a helper T-cell Th17 phenotype leading to increased IL-17 secretion; the costimulatory activity requires SH2D1A. Promotes recruitment of RORC to the IL-17 promoter. May be involved in the maintenance of peripheral cell tolerance by serving as a negative regulator of the immune response. May disable autoantibody responses and inhibit IFN-gamma secretion by CD4(+) T-cells. May negatively regulate the size of thymic innate CD8(+) T-cells and the development of invariant natural killer T (iNKT) cells. This is T-lymphocyte surface antigen Ly-9 (LY9) from Homo sapiens (Human).